Consider the following 479-residue polypeptide: Sulfate adenylyltransferase subunit 1 (479 aa).

The 215-residue stretch at 25–239 (KSLLRFLTCG…EVLETVDIQR (215 aa)) folds into the tr-type G domain. The segment at 34–41 (GSVDDGKS) is G1. 34–41 (GSVDDGKS) contacts GTP. The segment at 92-96 (GITID) is G2. Residues 113–116 (DTPG) are G3. Residues 113–117 (DTPGH) and 168–171 (NKMD) each bind GTP. The tract at residues 168 to 171 (NKMD) is G4. Residues 206-208 (SAL) are G5.

Belongs to the TRAFAC class translation factor GTPase superfamily. Classic translation factor GTPase family. CysN/NodQ subfamily. In terms of assembly, heterodimer composed of CysD, the smaller subunit, and CysN.

It catalyses the reaction sulfate + ATP + H(+) = adenosine 5'-phosphosulfate + diphosphate. Its pathway is sulfur metabolism; hydrogen sulfide biosynthesis; sulfite from sulfate: step 1/3. In terms of biological role, with CysD forms the ATP sulfurylase (ATPS) that catalyzes the adenylation of sulfate producing adenosine 5'-phosphosulfate (APS) and diphosphate, the first enzymatic step in sulfur assimilation pathway. APS synthesis involves the formation of a high-energy phosphoric-sulfuric acid anhydride bond driven by GTP hydrolysis by CysN coupled to ATP hydrolysis by CysD. This Salmonella typhi protein is Sulfate adenylyltransferase subunit 1.